Here is an 87-residue protein sequence, read N- to C-terminus: Small ribosomal subunit protein bS20 (87 aa).

Residues 1 to 22 (MANHKSALKRHKQSLKRAARNR) form a disordered region.

The protein belongs to the bacterial ribosomal protein bS20 family.

Its function is as follows. Binds directly to 16S ribosomal RNA. The sequence is that of Small ribosomal subunit protein bS20 from Nitratidesulfovibrio vulgaris (strain DP4) (Desulfovibrio vulgaris).